The sequence spans 77 residues: Acyl carrier protein (77 aa).

In terms of domain architecture, Carrier spans S2–S77. At S37 the chain carries O-(pantetheine 4'-phosphoryl)serine.

It belongs to the acyl carrier protein (ACP) family. In terms of processing, 4'-phosphopantetheine is transferred from CoA to a specific serine of apo-ACP by AcpS. This modification is essential for activity because fatty acids are bound in thioester linkage to the sulfhydryl of the prosthetic group.

The protein resides in the cytoplasm. It participates in lipid metabolism; fatty acid biosynthesis. Functionally, carrier of the growing fatty acid chain in fatty acid biosynthesis. The polypeptide is Acyl carrier protein (Desulforudis audaxviator (strain MP104C)).